We begin with the raw amino-acid sequence, 900 residues long: Bifunctional uridylyltransferase/uridylyl-removing enzyme (900 aa).

Residues 1-342 (MPQVDPELFD…PCEQPVQIQP (342 aa)) are uridylyltransferase. Positions 343–705 (LNSRFQLRDG…TTQREFESGS (363 aa)) are uridylyl-removing. An HD domain is found at 461-583 (VDAHTLNLIK…VGDQTHLDYL (123 aa)). ACT domains lie at 706-789 (QIFI…IIQR) and 816-891 (VLEV…DNGR).

The protein belongs to the GlnD family. Mg(2+) is required as a cofactor.

The catalysed reaction is [protein-PII]-L-tyrosine + UTP = [protein-PII]-uridylyl-L-tyrosine + diphosphate. The enzyme catalyses [protein-PII]-uridylyl-L-tyrosine + H2O = [protein-PII]-L-tyrosine + UMP + H(+). Its activity is regulated as follows. Uridylyltransferase (UTase) activity is inhibited by glutamine, while glutamine activates uridylyl-removing (UR) activity. Functionally, modifies, by uridylylation and deuridylylation, the PII regulatory proteins (GlnB and homologs), in response to the nitrogen status of the cell that GlnD senses through the glutamine level. Under low glutamine levels, catalyzes the conversion of the PII proteins and UTP to PII-UMP and PPi, while under higher glutamine levels, GlnD hydrolyzes PII-UMP to PII and UMP (deuridylylation). Thus, controls uridylylation state and activity of the PII proteins, and plays an important role in the regulation of nitrogen assimilation and metabolism. This chain is Bifunctional uridylyltransferase/uridylyl-removing enzyme, found in Pseudomonas aeruginosa (strain UCBPP-PA14).